We begin with the raw amino-acid sequence, 523 residues long: MTSTRQAGEATEASVRWRAVLLAAVAACAACGLVYELALLTLAASLNGGGIVATSLIVAGYIAALGAGALLIKPLLAHAAIAFIAVEAVLGIIGGLSAAALYAAFAFLDELDGSTLVLAVGTALIGGLVGAEVPLLMTLLQRGRVAGAADAGRTLANLNAADYLGALVGGLAWPFLLLPQLGMIRGAAVTGIVNLAAAGVVSIFLLRHVVSGRQLVTALCALAAALGLIATLLVHSHDIETTGRQQLYADPIIAYRHSAYQEIVVTRRGDDLRLYLDGGLQFCTRDEYRYTESLVYPAVSDGARSVLVLGGGDGLAARELLRQPGIEQIVQVELDPAVIELARTTLRDVNAGSLDNPRVHVVIDDAMSWLRGAAVPPAGFDAVIVDLRDPDTPVLGRLYSTEFYALAARALAPGGLMVVQAGSPYSTPTAFWRIISTIRSAGYAVTPYHVHVPTFGDWGFALARLTDIAPTPAVPSTAPALRFLDQQVLEAATVFSGDIRPRTLDPSTLDNPHIVEDMRHGWD.

Helical transmembrane passes span 20–40 (VLLA…LALL), 51–71 (IVAT…GALL), 88–108 (AVLG…FAFL), 116–136 (LVLA…VPLL), 164–184 (LGAL…LGMI), 186–206 (GAAV…IFLL), and 215–235 (LVTA…LLVH). The interval 203-478 (IFLLRHVVSG…APTPAVPSTA (276 aa)) is spermidine synthase. Positions 231–465 (TLLVHSHDIE…GDWGFALARL (235 aa)) constitute a PABS domain. S-methyl-5'-thioadenosine is bound at residue Q261. D313 contributes to the spermidine binding site. Residues E333 and 365–366 (DA) each bind S-methyl-5'-thioadenosine. D386 acts as the Proton acceptor in catalysis.

Belongs to the spermidine/spermine synthase family. Homodimer or homotetramer.

The protein resides in the cell membrane. It catalyses the reaction S-adenosyl 3-(methylsulfanyl)propylamine + putrescine = S-methyl-5'-thioadenosine + spermidine + H(+). It participates in amine and polyamine biosynthesis; spermidine biosynthesis; spermidine from putrescine: step 1/1. Functionally, catalyzes the irreversible transfer of a propylamine group from the amino donor S-adenosylmethioninamine (decarboxy-AdoMet) to putrescine (1,4-diaminobutane) to yield spermidine. The polypeptide is Polyamine aminopropyltransferase (Mycobacterium bovis (strain ATCC BAA-935 / AF2122/97)).